A 258-amino-acid chain; its full sequence is UPF0246 protein HS_0482 (258 aa).

This sequence belongs to the UPF0246 family.

This chain is UPF0246 protein HS_0482, found in Histophilus somni (strain 129Pt) (Haemophilus somnus).